We begin with the raw amino-acid sequence, 190 residues long: Elongation factor P 2 (190 aa).

Belongs to the elongation factor P family.

Its subcellular location is the cytoplasm. It functions in the pathway protein biosynthesis; polypeptide chain elongation. Functionally, involved in peptide bond synthesis. Stimulates efficient translation and peptide-bond synthesis on native or reconstituted 70S ribosomes in vitro. Probably functions indirectly by altering the affinity of the ribosome for aminoacyl-tRNA, thus increasing their reactivity as acceptors for peptidyl transferase. The polypeptide is Elongation factor P 2 (efp2) (Protochlamydia amoebophila (strain UWE25)).